Here is a 162-residue protein sequence, read N- to C-terminus: SsrA-binding protein (162 aa).

The protein belongs to the SmpB family.

Its subcellular location is the cytoplasm. Required for rescue of stalled ribosomes mediated by trans-translation. Binds to transfer-messenger RNA (tmRNA), required for stable association of tmRNA with ribosomes. tmRNA and SmpB together mimic tRNA shape, replacing the anticodon stem-loop with SmpB. tmRNA is encoded by the ssrA gene; the 2 termini fold to resemble tRNA(Ala) and it encodes a 'tag peptide', a short internal open reading frame. During trans-translation Ala-aminoacylated tmRNA acts like a tRNA, entering the A-site of stalled ribosomes, displacing the stalled mRNA. The ribosome then switches to translate the ORF on the tmRNA; the nascent peptide is terminated with the 'tag peptide' encoded by the tmRNA and targeted for degradation. The ribosome is freed to recommence translation, which seems to be the essential function of trans-translation. This is SsrA-binding protein from Buchnera aphidicola subsp. Acyrthosiphon pisum (strain 5A).